The chain runs to 270 residues: Putative phosphoenolpyruvate synthase regulatory protein (270 aa).

Residue 149–156 coordinates ADP; the sequence is GVSRSGKT.

Belongs to the pyruvate, phosphate/water dikinase regulatory protein family. PSRP subfamily.

It carries out the reaction [pyruvate, water dikinase] + ADP = [pyruvate, water dikinase]-phosphate + AMP + H(+). The enzyme catalyses [pyruvate, water dikinase]-phosphate + phosphate + H(+) = [pyruvate, water dikinase] + diphosphate. Functionally, bifunctional serine/threonine kinase and phosphorylase involved in the regulation of the phosphoenolpyruvate synthase (PEPS) by catalyzing its phosphorylation/dephosphorylation. In Alteromonas mediterranea (strain DSM 17117 / CIP 110805 / LMG 28347 / Deep ecotype), this protein is Putative phosphoenolpyruvate synthase regulatory protein.